The sequence spans 291 residues: N-acetylmannosamine kinase (291 aa).

ATP-binding positions include 5–12 (AIDIGGTK) and 132–139 (GVGGGVVC). Histidine 156, cysteine 166, cysteine 168, and cysteine 173 together coordinate Zn(2+).

The protein belongs to the ROK (NagC/XylR) family. NanK subfamily. As to quaternary structure, homodimer.

The catalysed reaction is an N-acyl-D-mannosamine + ATP = an N-acyl-D-mannosamine 6-phosphate + ADP + H(+). The protein operates within amino-sugar metabolism; N-acetylneuraminate degradation; D-fructose 6-phosphate from N-acetylneuraminate: step 2/5. Its function is as follows. Catalyzes the phosphorylation of N-acetylmannosamine (ManNAc) to ManNAc-6-P. This is N-acetylmannosamine kinase from Salmonella typhi.